A 255-amino-acid chain; its full sequence is Indole-3-glycerol phosphate synthase (255 aa).

It belongs to the TrpC family.

It carries out the reaction 1-(2-carboxyphenylamino)-1-deoxy-D-ribulose 5-phosphate + H(+) = (1S,2R)-1-C-(indol-3-yl)glycerol 3-phosphate + CO2 + H2O. The protein operates within amino-acid biosynthesis; L-tryptophan biosynthesis; L-tryptophan from chorismate: step 4/5. This Streptococcus pneumoniae (strain 70585) protein is Indole-3-glycerol phosphate synthase.